Consider the following 504-residue polypeptide: Probable alpha-L-arabinofuranosidase C (504 aa).

Residues Asn-152, Asn-181, Asn-269, and Asn-467 are each glycosylated (N-linked (GlcNAc...) asparagine).

This sequence belongs to the glycosyl hydrolase 51 family.

The protein localises to the secreted. The enzyme catalyses Hydrolysis of terminal non-reducing alpha-L-arabinofuranoside residues in alpha-L-arabinosides.. It functions in the pathway glycan metabolism; L-arabinan degradation. Alpha-L-arabinofuranosidase involved in the degradation of arabinoxylan, a major component of plant hemicellulose. Acts only on small linear 1,5-alpha-linked L-arabinofuranosyl oligosaccharides. In Aspergillus terreus (strain NIH 2624 / FGSC A1156), this protein is Probable alpha-L-arabinofuranosidase C (abfC).